A 457-amino-acid chain; its full sequence is Karyogamy meiotic segregation protein 2 (457 aa).

S134 carries the post-translational modification Phosphoserine.

In terms of assembly, interacts with sad1.

Its subcellular location is the cytoplasm. The protein resides in the cytoskeleton. The protein localises to the microtubule organizing center. It localises to the spindle pole body. The sequence is that of Karyogamy meiotic segregation protein 2 (kms2) from Schizosaccharomyces pombe (strain 972 / ATCC 24843) (Fission yeast).